A 343-amino-acid polypeptide reads, in one-letter code: Isopentenyl-diphosphate delta-isomerase (343 aa).

Residue Arg6–Lys7 coordinates substrate. Residues Ser63, Ser64–Thr66, Ser94, and Asn122 each bind FMN. Residue Ser94 to Arg96 coordinates substrate. Gln157 serves as a coordination point for substrate. Position 158 (Glu158) interacts with Mg(2+). FMN contacts are provided by residues Lys189, Thr219, Gly269 to Lys271, and Ala290 to Gly291.

It belongs to the IPP isomerase type 2 family. Homooctamer. Dimer of tetramers. It depends on FMN as a cofactor. Requires NADPH as cofactor. Mg(2+) is required as a cofactor.

It localises to the cytoplasm. It carries out the reaction isopentenyl diphosphate = dimethylallyl diphosphate. Involved in the biosynthesis of isoprenoids. Catalyzes the 1,3-allylic rearrangement of the homoallylic substrate isopentenyl (IPP) to its allylic isomer, dimethylallyl diphosphate (DMAPP). The protein is Isopentenyl-diphosphate delta-isomerase of Rickettsia bellii (strain OSU 85-389).